Consider the following 162-residue polypeptide: Cyclic pyranopterin monophosphate synthase (162 aa).

Residues 79-81 and 117-118 each bind substrate; these read LCH and ME. The active site involves Asp-132.

The protein belongs to the MoaC family. In terms of assembly, homohexamer; trimer of dimers.

The catalysed reaction is (8S)-3',8-cyclo-7,8-dihydroguanosine 5'-triphosphate = cyclic pyranopterin phosphate + diphosphate. Its pathway is cofactor biosynthesis; molybdopterin biosynthesis. Functionally, catalyzes the conversion of (8S)-3',8-cyclo-7,8-dihydroguanosine 5'-triphosphate to cyclic pyranopterin monophosphate (cPMP). This chain is Cyclic pyranopterin monophosphate synthase, found in Bordetella avium (strain 197N).